A 99-amino-acid polypeptide reads, in one-letter code: uncharacterized protein (99 aa).

Residues 6-26 (LVCSIVFILFILFYDLKIGTI) traverse the membrane as a helical segment. The LysM domain maps to 48–95 (KTVKVKPGDTVMSIVGSAGSPDDIVKDFEALNPNVKANAIQAGTAYKF).

The protein resides in the secreted. It localises to the cell wall. Its subcellular location is the membrane. This is an uncharacterized protein from Bacillus subtilis (strain 168).